Reading from the N-terminus, the 201-residue chain is Holliday junction resolvase RecU (201 aa).

4 residues coordinate Mg(2+): Thr87, Asp89, Asp102, and Gln121.

The protein belongs to the RecU family. Mg(2+) is required as a cofactor.

The protein localises to the cytoplasm. The enzyme catalyses Endonucleolytic cleavage at a junction such as a reciprocal single-stranded crossover between two homologous DNA duplexes (Holliday junction).. In terms of biological role, endonuclease that resolves Holliday junction intermediates in genetic recombination. Cleaves mobile four-strand junctions by introducing symmetrical nicks in paired strands. Promotes annealing of linear ssDNA with homologous dsDNA. Required for DNA repair, homologous recombination and chromosome segregation. This Levilactobacillus brevis (strain ATCC 367 / BCRC 12310 / CIP 105137 / JCM 1170 / LMG 11437 / NCIMB 947 / NCTC 947) (Lactobacillus brevis) protein is Holliday junction resolvase RecU.